The primary structure comprises 371 residues: Nicotinate-nucleotide pyrophosphorylase [carboxylating], chloroplastic (371 aa).

The N-terminal 48 residues, 1–48 (MPAAAAAAAPPNPNVLQLAPRLRGLVSFPSSYSSSSPFSNRLRLRLPR), are a transit peptide targeting the chloroplast. Substrate is bound by residues arginine 162, 193-195 (TRK), arginine 217, lysine 227, glutamate 260, aspartate 287, 319-321 (SGN), and 340-342 (SGA).

This sequence belongs to the NadC/ModD family.

It is found in the plastid. Its subcellular location is the chloroplast. It catalyses the reaction nicotinate beta-D-ribonucleotide + CO2 + diphosphate = quinolinate + 5-phospho-alpha-D-ribose 1-diphosphate + 2 H(+). The protein operates within cofactor biosynthesis; NAD(+) biosynthesis; nicotinate D-ribonucleotide from quinolinate: step 1/1. In terms of biological role, involved in the catabolism of quinolinic acid (QA). The polypeptide is Nicotinate-nucleotide pyrophosphorylase [carboxylating], chloroplastic (Oryza sativa subsp. japonica (Rice)).